The following is a 432-amino-acid chain: Adenylosuccinate synthetase (432 aa).

Residues 13-19 (GDEGKGK) and 41-43 (GHT) each bind GTP. The active-site Proton acceptor is D14. Mg(2+) contacts are provided by D14 and G41. Residues 14 to 17 (DEGK), 39 to 42 (NAGH), T130, R144, Q225, T240, and R304 each bind IMP. H42 serves as the catalytic Proton donor. Residue 300–306 (AVTGRPR) coordinates substrate. GTP-binding positions include R306, 332-334 (KLD), and 415-417 (STG).

It belongs to the adenylosuccinate synthetase family. Homodimer. It depends on Mg(2+) as a cofactor.

The protein localises to the cytoplasm. It carries out the reaction IMP + L-aspartate + GTP = N(6)-(1,2-dicarboxyethyl)-AMP + GDP + phosphate + 2 H(+). The protein operates within purine metabolism; AMP biosynthesis via de novo pathway; AMP from IMP: step 1/2. In terms of biological role, plays an important role in the de novo pathway of purine nucleotide biosynthesis. Catalyzes the first committed step in the biosynthesis of AMP from IMP. This is Adenylosuccinate synthetase from Histophilus somni (strain 129Pt) (Haemophilus somnus).